The primary structure comprises 594 residues: MLSSTLYAGWLLSLAAPALCVVQEKLSAVPSGWTLIEDASESDTITLSIALARQNLDQLESKLTTLATPGNPEYGKWLDQSDIESLFPTASDDAVLQWLKAAGITQVSRQGSLVNFATTVGTANKLFDTKFSYYRNGASQKLRTTQYSIPDHLTESIDLIAPTVFFGKEQNSALSSHAVKLPALPRRAATNSSCANLITPDCLVEMYNLGDYKPDASSGSRVGFGSFLNESANYADLAAYEQLFNIPPQNFSVELINRGVNDQNWATASLGEANLDVELIVAVSHPLPVVEFITGGSPPFVPNADEPTAADNQNEPYLQYYEYLLSKPNSHLPQVISNSYGDDEQTVPEYYARRVCNLIGLMGLRGITVLESSGDTGIGSACMSNDGTNKPQFTPTFPGTCPFITAVGGTQSYAPEVAWDGSSGGFSNYFSRPWYQSFAVDNYLNNHITKDTKKYYSQYTNFKGRGFPDVSAHSLTPYYEVVLTGKHYKSGGTSAASPVFAGIVGLLNDARLRAGKSTLGFLNPLLYSILAEGFTDITAGSSIGCNGINPQTGKPVPGGGIIPYAHWNATAGWDPVTGLGVPDFMKLKELVLSL.

The signal sequence occupies residues 1 to 20 (MLSSTLYAGWLLSLAAPALC). The propeptide at 21 to 187 (VVQEKLSAVP…AVKLPALPRR (167 aa)) is removed in mature form. 3 N-linked (GlcNAc...) asparagine glycosylation sites follow: Asn191, Asn229, and Asn250. The 398-residue stretch at 197–594 (LITPDCLVEM…MKLKELVLSL (398 aa)) folds into the Peptidase S53 domain. Residues Glu272, Asp276, and Ser494 each act as charge relay system in the active site. Asp536 and Ile537 together coordinate Ca(2+). N-linked (GlcNAc...) asparagine glycosylation occurs at Asn568. 2 residues coordinate Ca(2+): Gly572 and Asp574.

The cofactor is Ca(2+). Post-translationally, N-glycosylated.

The protein localises to the secreted. The protein resides in the extracellular space. The enzyme catalyses Release of an N-terminal tripeptide from a polypeptide.. In terms of biological role, secreted tripeptidyl-peptidase which degrades proteins at acidic pHs and is involved in virulence. The chain is Tripeptidyl-peptidase sed4 (sed4) from Aspergillus fumigatus (strain ATCC MYA-4609 / CBS 101355 / FGSC A1100 / Af293) (Neosartorya fumigata).